We begin with the raw amino-acid sequence, 308 residues long: Ribosomal RNA large subunit methyltransferase F (308 aa).

A disordered region spans residues 190–212; that stretch reads DSAASARAGSERKRRNLGQDKND.

This sequence belongs to the methyltransferase superfamily. METTL16/RlmF family.

Its subcellular location is the cytoplasm. The catalysed reaction is adenosine(1618) in 23S rRNA + S-adenosyl-L-methionine = N(6)-methyladenosine(1618) in 23S rRNA + S-adenosyl-L-homocysteine + H(+). Specifically methylates the adenine in position 1618 of 23S rRNA. This Citrobacter koseri (strain ATCC BAA-895 / CDC 4225-83 / SGSC4696) protein is Ribosomal RNA large subunit methyltransferase F.